Here is a 226-residue protein sequence, read N- to C-terminus: RNA annealing protein YRA1 (226 aa).

Positions 1–62 (MSANLDKSLD…PIRKNTRAPP (62 aa)) are disordered. An N-acetylserine modification is found at S2. Residues S8 and S100 each carry the phosphoserine modification. The RRM domain maps to 78–158 (VKVNVEGLPR…SRLRLNLIVD (81 aa)). The tract at residues 173–226 (AMPQKGGNAPRPVKRGPNRKAAMAKSQNKPKREKPAKKSLEDLDKEMADYFEKK) is disordered. Residues 208–226 (AKKSLEDLDKEMADYFEKK) are compositionally biased toward basic and acidic residues.

Component of the transcription/export (TREX) complex, which is at least is formed of SUB2, TEX1 and YRA1 and the THO complex composed of HPR1, MFT1, THO2 and THP1. Interacts with RDS3 and YRA2.

It localises to the nucleus. Functionally, RNA-binding RNA annealing protein. May have a role in pre-mRNA metabolism. Component the TREX complex, which operates in coupling transcription elongation to mRNA export. This Saccharomyces cerevisiae (strain ATCC 204508 / S288c) (Baker's yeast) protein is RNA annealing protein YRA1 (YRA1).